The chain runs to 429 residues: Histidine--tRNA ligase (429 aa).

Belongs to the class-II aminoacyl-tRNA synthetase family. In terms of assembly, homodimer.

The protein resides in the cytoplasm. The catalysed reaction is tRNA(His) + L-histidine + ATP = L-histidyl-tRNA(His) + AMP + diphosphate + H(+). This chain is Histidine--tRNA ligase, found in Prochlorococcus marinus (strain MIT 9515).